A 453-amino-acid chain; its full sequence is Chromosomal replication initiator protein DnaA (453 aa).

The segment at M1 to Q79 is domain I, interacts with DnaA modulators. Residues Q79–S111 form a domain II region. Residues Y112–S330 form a domain III, AAA+ region region. 4 residues coordinate ATP: G156, G158, K159, and T160. Positions R331–P453 are domain IV, binds dsDNA.

Belongs to the DnaA family. As to quaternary structure, oligomerizes as a right-handed, spiral filament on DNA at oriC.

The protein localises to the cytoplasm. Its function is as follows. Plays an essential role in the initiation and regulation of chromosomal replication. ATP-DnaA binds to the origin of replication (oriC) to initiate formation of the DNA replication initiation complex once per cell cycle. Binds the DnaA box (a 9 base pair repeat at the origin) and separates the double-stranded (ds)DNA. Forms a right-handed helical filament on oriC DNA; dsDNA binds to the exterior of the filament while single-stranded (ss)DNA is stabiized in the filament's interior. The ATP-DnaA-oriC complex binds and stabilizes one strand of the AT-rich DNA unwinding element (DUE), permitting loading of DNA polymerase. After initiation quickly degrades to an ADP-DnaA complex that is not apt for DNA replication. Binds acidic phospholipids. This Lachnoclostridium phytofermentans (strain ATCC 700394 / DSM 18823 / ISDg) (Clostridium phytofermentans) protein is Chromosomal replication initiator protein DnaA.